The sequence spans 444 residues: 23S rRNA (uracil(1939)-C(5))-methyltransferase RlmD (444 aa).

The TRAM domain maps to 5-67; it reads RNRFDRTPFQ…RHFDEAKTVE (63 aa). [4Fe-4S] cluster-binding residues include C80, C86, C89, and C168. S-adenosyl-L-methionine is bound by residues Q276, F305, N310, E326, D353, and D374. C400 (nucleophile) is an active-site residue.

The protein belongs to the class I-like SAM-binding methyltransferase superfamily. RNA M5U methyltransferase family. RlmD subfamily.

The enzyme catalyses uridine(1939) in 23S rRNA + S-adenosyl-L-methionine = 5-methyluridine(1939) in 23S rRNA + S-adenosyl-L-homocysteine + H(+). Catalyzes the formation of 5-methyl-uridine at position 1939 (m5U1939) in 23S rRNA. In Xanthomonas oryzae pv. oryzae (strain MAFF 311018), this protein is 23S rRNA (uracil(1939)-C(5))-methyltransferase RlmD.